The following is a 111-amino-acid chain: uncharacterized protein (111 aa).

The segment at 1–26 (MDLKDGVEEEEGAGENGKGGTHAQRV) is disordered.

This is an uncharacterized protein from Caenorhabditis elegans.